Here is a 110-residue protein sequence, read N- to C-terminus: Acylphosphatase (110 aa).

The Acylphosphatase-like domain occupies 24-110 (RVRVYVSGRV…SGGARGFEVR (87 aa)). Active-site residues include Arg39 and Asn57.

This sequence belongs to the acylphosphatase family.

It catalyses the reaction an acyl phosphate + H2O = a carboxylate + phosphate + H(+). The sequence is that of Acylphosphatase (acyP) from Rubrobacter xylanophilus (strain DSM 9941 / JCM 11954 / NBRC 16129 / PRD-1).